A 404-amino-acid polypeptide reads, in one-letter code: Probable pectate lyase 18 (404 aa).

Residues Met-1–Ser-20 form the signal peptide. N-linked (GlcNAc...) asparagine glycosylation is present at Asn-37. An intrachain disulfide couples Cys-159 to Cys-178. The N-linked (GlcNAc...) asparagine glycan is linked to Asn-191. Residues Asp-200, Asp-202, Asp-224, and Asp-228 each coordinate Ca(2+). Arg-280 is an active-site residue.

Belongs to the polysaccharide lyase 1 family. Ca(2+) serves as cofactor. In terms of tissue distribution, predominantly found in the pistil where it is found in the outer five layers of the strands of transmitting tissue within the upper two-thirds of the style. Found at much lower levels in the anthers and vegetative organs.

The protein localises to the secreted. The enzyme catalyses Eliminative cleavage of (1-&gt;4)-alpha-D-galacturonan to give oligosaccharides with 4-deoxy-alpha-D-galact-4-enuronosyl groups at their non-reducing ends.. It participates in glycan metabolism; pectin degradation; 2-dehydro-3-deoxy-D-gluconate from pectin: step 2/5. May have a role in the development of the transmitting tissue of the style and/or in the events related to pollination such as some aspect in the facilitation of compatible pollen tube growth. This Solanum lycopersicum (Tomato) protein is Probable pectate lyase 18.